The primary structure comprises 77 residues: Apelin (77 aa).

Residues 1 to 22 (MNLRLCVQALLLLWLSLTAVCG) form the signal peptide. The propeptide occupies 23-41 (GSLMPLPDGNGLEDGNVRH). The tract at residues 43-77 (VQPRGSRNGPGPWQGGRRKFRRQRPRLSHKGPMPF) is disordered. Positions 58–71 (GRRKFRRQRPRLSH) are enriched in basic residues.

The protein belongs to the apelin family. Post-translationally, several active peptides may be produced by proteolytic processing of the peptide precursor. Expressed in the brain with highest levels in the frontal cortex, thalamus, hypothalamus and midbrain. Secreted by the mammary gland into the colostrum and the milk.

It is found in the secreted. The protein localises to the extracellular space. Peptide hormone that functions as endogenous ligand for the G-protein-coupled apelin receptor (APLNR/APJ), that plays a role in cadiovascular homeostasis. Functions as a balanced agonist activating both G(i) protein pathway and beta-arrestin pathway of APLNR. Downstream G proteins activation, apelin can inhibit cAMP production and activate key intracellular effectors such as ERKs. On the other hand, APLNR activation induces beta-arrestin recruitment to the membrane leading to desensitization and internalization of the receptor. Apelin blunts cardiac hypertrophic induction from APLNR on response to pathological stimuli, but also induces myocardial hypertrophy under normal conditions. Apelin-36 dissociates more hardly than (pyroglu)apelin-13 from APLNR. Involved in the regulation of cardiac precursor cell movements during gastrulation and heart morphogenesis. Has an inhibitory effect on cytokine production in response to T-cell receptor/CD3 cross-linking; the oral intake of apelin in the colostrum and the milk might therefore modulate immune responses in neonates. Plays a role in early coronary blood vessels formation. Mediates myocardial contractility in an ERK1/2-dependent manner. May also have a role in the central control of body fluid homeostasis by influencing vasopressin release and drinking behavior. Functionally, (Microbial infection) Endogenous ligand for the apelin receptor (APLNR), an alternative coreceptor with CD4 for HIV-1 infection. Inhibits HIV-1 entry in cells coexpressing CD4 and APLNR. Apelin-36 has a greater inhibitory activity on HIV infection than other synthetic apelin derivatives. This Homo sapiens (Human) protein is Apelin.